An 815-amino-acid chain; its full sequence is Glycogen phosphorylase (815 aa).

Lys662 is modified (N6-(pyridoxal phosphate)lysine).

This sequence belongs to the glycogen phosphorylase family. Requires pyridoxal 5'-phosphate as cofactor.

The enzyme catalyses [(1-&gt;4)-alpha-D-glucosyl](n) + phosphate = [(1-&gt;4)-alpha-D-glucosyl](n-1) + alpha-D-glucose 1-phosphate. Functionally, phosphorylase is an important allosteric enzyme in carbohydrate metabolism. Enzymes from different sources differ in their regulatory mechanisms and in their natural substrates. However, all known phosphorylases share catalytic and structural properties. This Shigella flexneri protein is Glycogen phosphorylase (glgP).